A 487-amino-acid chain; its full sequence is Chromosomal replication initiator protein DnaA (487 aa).

The tract at residues 1–71 is domain I, interacts with DnaA modulators; the sequence is MMHDALFERF…TSLVQSEDPD (71 aa). Residues 71 to 141 form a domain II region; sequence DVLKVEILVR…QGGSGPLFGS (71 aa). Residues 142–364 are domain III, AAA+ region; that stretch reads PLDTRFTFDT…GAFNQLMFRR (223 aa). Residues G188, G190, K191, and T192 each contribute to the ATP site. Positions 365 to 487 are domain IV, binds dsDNA; it reads SFEPNLSVDR…LKRLINENNA (123 aa).

Belongs to the DnaA family. Oligomerizes as a right-handed, spiral filament on DNA at oriC.

The protein resides in the cytoplasm. Its function is as follows. Plays an essential role in the initiation and regulation of chromosomal replication. ATP-DnaA binds to the origin of replication (oriC) to initiate formation of the DNA replication initiation complex once per cell cycle. Binds the DnaA box (a 9 base pair repeat at the origin) and separates the double-stranded (ds)DNA. Forms a right-handed helical filament on oriC DNA; dsDNA binds to the exterior of the filament while single-stranded (ss)DNA is stabiized in the filament's interior. The ATP-DnaA-oriC complex binds and stabilizes one strand of the AT-rich DNA unwinding element (DUE), permitting loading of DNA polymerase. After initiation quickly degrades to an ADP-DnaA complex that is not apt for DNA replication. Binds acidic phospholipids. This Agrobacterium fabrum (strain C58 / ATCC 33970) (Agrobacterium tumefaciens (strain C58)) protein is Chromosomal replication initiator protein DnaA.